A 163-amino-acid chain; its full sequence is Arginine repressor (163 aa).

It belongs to the ArgR family.

The protein resides in the cytoplasm. It participates in amino-acid biosynthesis; L-arginine biosynthesis [regulation]. Regulates arginine biosynthesis genes. This is Arginine repressor from Corynebacterium diphtheriae (strain ATCC 700971 / NCTC 13129 / Biotype gravis).